Reading from the N-terminus, the 495-residue chain is Leucine aminopeptidase 2 (495 aa).

The first 21 residues, 1-21 (MKSQLLSLAVAVSTISQGVVG), serve as a signal peptide directing secretion. Residues 124–218 (PPANKIMAEL…EDGKNLASLV (95 aa)) enclose the PA domain. Residues N142 and N235 are each glycosylated (N-linked (GlcNAc...) asparagine). 2 residues coordinate Zn(2+): H259 and D271. An N-linked (GlcNAc...) asparagine glycan is attached at N272. E303 functions as the Proton acceptor in the catalytic mechanism. Zn(2+) is bound by residues E304 and D332. N352 carries N-linked (GlcNAc...) asparagine glycosylation. Residue H430 coordinates Zn(2+).

It belongs to the peptidase M28 family. M28A subfamily. As to quaternary structure, monomer. The cofactor is Zn(2+).

It localises to the secreted. Extracellular aminopeptidase that releases a wide variety of amino acids from natural peptides and contributes to pathogenicity. The chain is Leucine aminopeptidase 2 (LAP2) from Trichophyton tonsurans (Scalp ringworm fungus).